The primary structure comprises 147 residues: Ubiquitin-conjugating enzyme E2 4 (147 aa).

Residues 1-147 enclose the UBC core domain; the sequence is MALKRINREL…AREWTRKYAI (147 aa). C85 (glycyl thioester intermediate) is an active-site residue.

Belongs to the ubiquitin-conjugating enzyme family. As to quaternary structure, interacts with the E1 ubiquitin-activating enzyme ptr3 and E3 ubiquitin-protein ligase pub2.

The enzyme catalyses S-ubiquitinyl-[E1 ubiquitin-activating enzyme]-L-cysteine + [E2 ubiquitin-conjugating enzyme]-L-cysteine = [E1 ubiquitin-activating enzyme]-L-cysteine + S-ubiquitinyl-[E2 ubiquitin-conjugating enzyme]-L-cysteine.. The protein operates within protein modification; protein ubiquitination. Its function is as follows. E2 ubiquitin-conjugating enzyme that catalyzes the covalent attachment of ubiquitin to other proteins. Mediates the selective degradation of short-lived and abnormal proteins. Mediates ubiquitination of pex5. This chain is Ubiquitin-conjugating enzyme E2 4 (ubc4), found in Schizosaccharomyces pombe (strain 972 / ATCC 24843) (Fission yeast).